The chain runs to 342 residues: Methylthioribose-1-phosphate isomerase (342 aa).

Substrate-binding positions include Arg-44 to Ala-46, Arg-85, and Gln-192. The active-site Proton donor is Asp-233. Residue Asn-243–Lys-244 coordinates substrate.

Belongs to the eIF-2B alpha/beta/delta subunits family. MtnA subfamily.

The enzyme catalyses 5-(methylsulfanyl)-alpha-D-ribose 1-phosphate = 5-(methylsulfanyl)-D-ribulose 1-phosphate. It participates in amino-acid biosynthesis; L-methionine biosynthesis via salvage pathway; L-methionine from S-methyl-5-thio-alpha-D-ribose 1-phosphate: step 1/6. Functionally, catalyzes the interconversion of methylthioribose-1-phosphate (MTR-1-P) into methylthioribulose-1-phosphate (MTRu-1-P). The chain is Methylthioribose-1-phosphate isomerase from Caldicellulosiruptor saccharolyticus (strain ATCC 43494 / DSM 8903 / Tp8T 6331).